Here is a 354-residue protein sequence, read N- to C-terminus: Protein PHLOEM PROTEIN 2-LIKE A8 (354 aa).

The TIR domain occupies 12 to 179 (TGPQVFINFR…EMILEIQKAL (168 aa)). Glu-86 is a catalytic residue.

The enzyme catalyses NAD(+) + H2O = ADP-D-ribose + nicotinamide + H(+). This chain is Protein PHLOEM PROTEIN 2-LIKE A8 (PP2A8), found in Arabidopsis thaliana (Mouse-ear cress).